The sequence spans 148 residues: MVDWTDAERAAITSLWGKIDVGEIGPQALTRLLIVYPWTQRHFTTFGNVSTNAAILGNPKVAQHGKTVMGGLENAVKNLDDIKNTYAKLSRMHSEKLHVDPDNFRALAECISVCVAAKFGKQAFTADVQEAWQKFLSAVVSALGRQYH.

One can recognise a Globin domain in the interval 3 to 148 (DWTDAERAAI…VVSALGRQYH (146 aa)). The heme b site is built by His-64 and His-93.

This sequence belongs to the globin family. Heterotetramer of two alpha chains and two beta chains. In terms of tissue distribution, red blood cells.

Involved in oxygen transport from gills to the various peripheral tissues. This Seriola quinqueradiata (Five-ray yellowtail) protein is Hemoglobin subunit beta-B (hbb2).